The sequence spans 244 residues: 1-(5-phosphoribosyl)-5-[(5-phosphoribosylamino)methylideneamino] imidazole-4-carboxamide isomerase (244 aa).

The active-site Proton acceptor is Asp8. Asp129 serves as the catalytic Proton donor.

The protein belongs to the HisA/HisF family.

The protein resides in the cytoplasm. It catalyses the reaction 1-(5-phospho-beta-D-ribosyl)-5-[(5-phospho-beta-D-ribosylamino)methylideneamino]imidazole-4-carboxamide = 5-[(5-phospho-1-deoxy-D-ribulos-1-ylimino)methylamino]-1-(5-phospho-beta-D-ribosyl)imidazole-4-carboxamide. The protein operates within amino-acid biosynthesis; L-histidine biosynthesis; L-histidine from 5-phospho-alpha-D-ribose 1-diphosphate: step 4/9. This Maricaulis maris (strain MCS10) (Caulobacter maris) protein is 1-(5-phosphoribosyl)-5-[(5-phosphoribosylamino)methylideneamino] imidazole-4-carboxamide isomerase.